The chain runs to 146 residues: Hemoglobin subunit beta (146 aa).

The residue at position 1 (valine 1) is an N-acetylvaline. Residues 2-146 (HLSGEEKGAV…VATALAHKYH (145 aa)) enclose the Globin domain. Threonine 12 carries the phosphothreonine modification. At serine 44 the chain carries Phosphoserine. Lysine 59 is subject to N6-acetyllysine. Heme b is bound at residue histidine 63. The residue at position 82 (lysine 82) is an N6-acetyllysine. Residue histidine 92 coordinates heme b. Cysteine 93 carries the post-translational modification S-nitrosocysteine. N6-acetyllysine is present on lysine 144.

The protein belongs to the globin family. In terms of assembly, heterotetramer of two alpha chains and two beta chains. As to expression, red blood cells.

In terms of biological role, involved in oxygen transport from the lung to the various peripheral tissues. In Tadarida brasiliensis (Brazilian free-tailed bat), this protein is Hemoglobin subunit beta (HBB).